A 296-amino-acid chain; its full sequence is MNKKLLNPLEDPPTASSSEDVDEEISSGEDEKEHISNSSSSEEENELKDLSTQTLNSPSTEAPTLDSGSETNSDSDKPIVLTSQKKKEGTDSSGTKRASEGTSSKDIKRAKKVSGDDDNKKFQSLWTKEDEISLLQGMIDFKAETGTSAHDDMNGFFDIAKRYISFDVSKIQFGDKIRGLKKKYFGVRKKKGLDLDHDKKCLGLAKSIWGLDGKEVVVLGGDSETSNWFEKSFLVRVVARLGVDECIVKWKWSKVSKETKKRIEEKMKMVEAKELELLSQKIDVLKEVASVIAETI.

The disordered stretch occupies residues 1–119 (MNKKLLNPLE…AKKVSGDDDN (119 aa)). Over residues 19–28 (EDVDEEISSG) the composition is skewed to acidic residues. Residues 52-72 (TQTLNSPSTEAPTLDSGSETN) show a composition bias toward polar residues. Basic and acidic residues predominate over residues 97 to 119 (RASEGTSSKDIKRAKKVSGDDDN).

The protein belongs to the GeBP family.

The polypeptide is Probable transcription factor At1g44810 (Arabidopsis thaliana (Mouse-ear cress)).